A 90-amino-acid chain; its full sequence is Small ribosomal subunit protein uS19 (90 aa).

It belongs to the universal ribosomal protein uS19 family.

Functionally, protein S19 forms a complex with S13 that binds strongly to the 16S ribosomal RNA. The sequence is that of Small ribosomal subunit protein uS19 from Mesomycoplasma hyopneumoniae (strain 232) (Mycoplasma hyopneumoniae).